The sequence spans 143 residues: Large ribosomal subunit protein uL11 (143 aa).

Belongs to the universal ribosomal protein uL11 family. As to quaternary structure, part of the ribosomal stalk of the 50S ribosomal subunit. Interacts with L10 and the large rRNA to form the base of the stalk. L10 forms an elongated spine to which L12 dimers bind in a sequential fashion forming a multimeric L10(L12)X complex. Post-translationally, one or more lysine residues are methylated.

In terms of biological role, forms part of the ribosomal stalk which helps the ribosome interact with GTP-bound translation factors. The sequence is that of Large ribosomal subunit protein uL11 from Rhizorhabdus wittichii (strain DSM 6014 / CCUG 31198 / JCM 15750 / NBRC 105917 / EY 4224 / RW1) (Sphingomonas wittichii).